Reading from the N-terminus, the 423-residue chain is Type II methyltransferase M.BamHI (423 aa).

The span at 397-414 shows a compositional bias: basic and acidic residues; the sequence is DFRQDHEGNSKGDKKNEN. The interval 397 to 423 is disordered; it reads DFRQDHEGNSKGDKKNENNDQISLSLE.

This sequence belongs to the N(4)/N(6)-methyltransferase family.

The catalysed reaction is a 2'-deoxycytidine in DNA + S-adenosyl-L-methionine = an N(4)-methyl-2'-deoxycytidine in DNA + S-adenosyl-L-homocysteine + H(+). Its function is as follows. A beta subtype methylase, recognizes the double-stranded sequence 5'-GGATCC-3', methylates C-5 on both strands, and protects the DNA from cleavage by the BamHI endonuclease. The protein is Type II methyltransferase M.BamHI of Bacillus amyloliquefaciens (Bacillus velezensis).